We begin with the raw amino-acid sequence, 438 residues long: Adenylyltransferase and sulfurtransferase UBA4 (438 aa).

ATP is bound by residues Gly81, Asp102, 109-113 (SNLHR), Lys126, and 170-171 (DH). Zn(2+)-binding residues include Cys212 and Cys215. Cys229 functions as the Glycyl thioester intermediate; for adenylyltransferase activity in the catalytic mechanism. Cys290 and Cys293 together coordinate Zn(2+). Positions 340-436 (NKKKHILIDV…WSDDVDSKIP (97 aa)) constitute a Rhodanese domain. Cys396 serves as the catalytic Cysteine persulfide intermediate; for sulfurtransferase activity.

The protein in the N-terminal section; belongs to the HesA/MoeB/ThiF family. UBA4 subfamily. Requires Zn(2+) as cofactor.

The protein localises to the cytoplasm. Its subcellular location is the cytosol. It participates in tRNA modification; 5-methoxycarbonylmethyl-2-thiouridine-tRNA biosynthesis. In terms of biological role, plays a central role in 2-thiolation of mcm(5)S(2)U at tRNA wobble positions of cytosolic tRNA(Lys), tRNA(Glu) and tRNA(Gln). Acts by mediating the C-terminal thiocarboxylation of sulfur carrier URM1. Its N-terminus first activates URM1 as acyl-adenylate (-COAMP), then the persulfide sulfur on the catalytic cysteine is transferred to URM1 to form thiocarboxylation (-COSH) of its C-terminus. The reaction probably involves hydrogen sulfide that is generated from the persulfide intermediate and that acts as a nucleophile towards URM1. Subsequently, a transient disulfide bond is formed. Does not use thiosulfate as sulfur donor; NFS1 probably acting as a sulfur donor for thiocarboxylation reactions. Prior mcm(5) tRNA modification by the elongator complex is required for 2-thiolation. May also be involved in protein urmylation. The polypeptide is Adenylyltransferase and sulfurtransferase UBA4 (Candida albicans (strain SC5314 / ATCC MYA-2876) (Yeast)).